We begin with the raw amino-acid sequence, 219 residues long: MOB kinase activator-like 1 (219 aa).

Residues C79, C84, H161, and H166 each contribute to the Zn(2+) site.

This sequence belongs to the MOB1/phocein family. Interacts with and activates trc and wts. In terms of processing, phosphorylated by wts/mats kinase complex. Activated by phosphorylation by Hippo (Hpo) kinase which increases its affinity and its ability to activate Warts (Wts) kinase. In terms of tissue distribution, ubiquitously expressed at low levels in developing tissues (at protein level).

The protein localises to the cytoplasm. The protein resides in the cytoskeleton. It localises to the microtubule organizing center. Its subcellular location is the centrosome. It is found in the nucleus. The protein localises to the cytosol. The protein resides in the cell membrane. Its function is as follows. Coactivator of Warts (Wts) kinase in the Hippo/SWH (Sav/Wts/Hpo)signaling pathway, a signaling pathway that plays a pivotal role in organ size control and tumor suppression by restricting proliferation and promoting apoptosis. The core of this pathway is composed of a kinase cascade wherein Hippo (Hpo), in complex with its regulatory protein Salvador (Sav), phosphorylates and activates Warts (Wts) in complex with its regulatory protein Mats, which in turn phosphorylates and inactivates the Yorkie (Yki)oncoprotein. The Hippo/SWH signaling pathway inhibits the activity of the transcriptional complex formed by Scalloped (sd) and Yki and the target genes of this pathway include cyclin-E (cycE), diap1 and bantam. Mats is essential for early development and is required for proper chromosomal segregation in developing embryos. This chain is MOB kinase activator-like 1, found in Drosophila melanogaster (Fruit fly).